The sequence spans 200 residues: Snake venom metalloproteinase BmooMP-I (200 aa).

The region spanning 5–200 is the Peptidase M12B domain; sequence RYIELAVVAD…HNPQCILNEP (196 aa). Positions 8 and 92 each coordinate Ca(2+). Intrachain disulfides connect Cys116–Cys195, Cys155–Cys179, and Cys157–Cys162. His141 provides a ligand contact to Zn(2+). Glu142 is an active-site residue. Zn(2+) contacts are provided by His145 and His151. The Ca(2+) site is built by Cys195 and Asn198.

This sequence belongs to the venom metalloproteinase (M12B) family. P-I subfamily. Monomer. The cofactor is Zn(2+). Expressed by the venom gland.

Its subcellular location is the secreted. Zinc metalloprotease that displays fibrinogenolytic, gelatinase and weak hemorrhagic activities. Degrades the three chain of fibrinogen Aalpha-chain (FGA), Bbeta-chain (FGB), and gamma (FGG). This Bothrops moojeni (Lance-headed viper) protein is Snake venom metalloproteinase BmooMP-I.